Reading from the N-terminus, the 326-residue chain is Phospho-N-acetylmuramoyl-pentapeptide-transferase (326 aa).

10 consecutive transmembrane segments (helical) span residues 2–22, 51–71, 73–93, 113–133, 143–163, 175–195, 199–219, 225–245, 250–270, and 305–325; these read ILATKVFFTSFVFGFILFPYF, VPPMGGIIILTSSLLPILLWV, LTPEILLLILITLFFALLGFI, ILIQFIVALVGVFILKLYSAE, GVIIDFGYLYVPFAAFVIVGS, GLAATQVITSFAFLGLIAYIT, MNITLFCIAFIGAILSFLWFN, IFMGDVGSLSVGAALGLTSVL, MLFAVIGIIFVIETLSVIIQI, and VIVMKFWIISIICSVFTITFL.

The protein belongs to the glycosyltransferase 4 family. MraY subfamily. It depends on Mg(2+) as a cofactor.

It is found in the cell membrane. It catalyses the reaction UDP-N-acetyl-alpha-D-muramoyl-L-alanyl-gamma-D-glutamyl-meso-2,6-diaminopimeloyl-D-alanyl-D-alanine + di-trans,octa-cis-undecaprenyl phosphate = di-trans,octa-cis-undecaprenyl diphospho-N-acetyl-alpha-D-muramoyl-L-alanyl-D-glutamyl-meso-2,6-diaminopimeloyl-D-alanyl-D-alanine + UMP. It functions in the pathway cell wall biogenesis; peptidoglycan biosynthesis. Catalyzes the initial step of the lipid cycle reactions in the biosynthesis of the cell wall peptidoglycan: transfers peptidoglycan precursor phospho-MurNAc-pentapeptide from UDP-MurNAc-pentapeptide onto the lipid carrier undecaprenyl phosphate, yielding undecaprenyl-pyrophosphoryl-MurNAc-pentapeptide, known as lipid I. This is Phospho-N-acetylmuramoyl-pentapeptide-transferase from Wolbachia sp. subsp. Drosophila simulans (strain wRi).